Consider the following 394-residue polypeptide: E3 ubiquitin-protein ligase RNF149 (394 aa).

The N-terminal stretch at 1–31 is a signal peptide; that stretch reads MAARRRPAAGVGARDALAVLALALCTPGVGG. Residues Asn-51 and Asn-141 are each glycosylated (N-linked (GlcNAc...) asparagine). Residues 66-171 form the PA domain; it reads SSLREERQGL…PKGREIFDLV (106 aa). Residues 197–217 traverse the membrane as a helical segment; the sequence is VVFVAIAFITMMIISLAWLIF. The segment at 265 to 306 adopts an RING-type; atypical zinc-finger fold; that stretch reads CAVCIENFKVKDVIRILPCKHIFHRICIDPWLLDHRTCPMCK. The interval 321–394 is disordered; that stretch reads DTQELPTPEA…SEPQHGGSIC (74 aa). Residue Thr-327 is modified to Phosphothreonine. An N-linked (GlcNAc...) asparagine glycan is attached at Asn-339. Ser-341 and Ser-344 each carry phosphoserine. Over residues 352-362 the composition is skewed to low complexity; the sequence is SNLPSSSSSES.

It is found in the membrane. The catalysed reaction is S-ubiquitinyl-[E2 ubiquitin-conjugating enzyme]-L-cysteine + [acceptor protein]-L-lysine = [E2 ubiquitin-conjugating enzyme]-L-cysteine + N(6)-ubiquitinyl-[acceptor protein]-L-lysine.. It functions in the pathway protein modification; protein ubiquitination. E3 ubiquitin-protein ligase. Ubiquitinates BRAF, inducing its proteasomal degradation. The protein is E3 ubiquitin-protein ligase RNF149 (Rnf149) of Mus musculus (Mouse).